The following is a 123-amino-acid chain: Large ribosomal subunit protein bL12 (123 aa).

Belongs to the bacterial ribosomal protein bL12 family. As to quaternary structure, homodimer. Part of the ribosomal stalk of the 50S ribosomal subunit. Forms a multimeric L10(L12)X complex, where L10 forms an elongated spine to which 2 to 4 L12 dimers bind in a sequential fashion. Binds GTP-bound translation factors.

Its function is as follows. Forms part of the ribosomal stalk which helps the ribosome interact with GTP-bound translation factors. Is thus essential for accurate translation. This is Large ribosomal subunit protein bL12 from Shewanella sp. (strain MR-4).